The primary structure comprises 440 residues: MTDGLPERFDVLVHPVSELRGELRAQPSKNYTTRYLLAAALAEGETRVVGAATSEDAEALIRCLRAWGADVDRVGEDVVVRGFGAHPRAGMTLNPGNAGAVARFLMGVAALTTDTTFVTDYSESLGRRPQGDLLAALERLGARVSSRNGQLPVTLSGPVRGGRVEVSAQRSSQYASALMFLGPLLPDGLDLRLTGEIKSHAPLRQTLDTLAAFGLQARASADLTRITIPGGQAYRPGRVLVPGDYPGSAALLVAAALLPGEVTVTNLREGDLQGEREALNVLRAMGADLVREGDRVTVRGGRPLHAVTRDGDSFTDAVQALTAAAAFARGTTTWENVATLRLKECDRISDTRRELERLGLTATETADSLSITGADRIPGDLTADGHGDHRMIMLLTLLGLRAEAPLRITGAHHIRKSYPLFFRHLEELGAHFEYLPTDAA.

2 residues coordinate 3-phosphoshikimate: Lys29 and Arg34. Residue Lys29 coordinates phosphoenolpyruvate. 2 residues coordinate phosphoenolpyruvate: Gly99 and Arg128. 3-phosphoshikimate is bound by residues Ser171, Ser172, Gln173, Ser199, Asp316, and Lys343. Gln173 provides a ligand contact to phosphoenolpyruvate. Asp316 serves as the catalytic Proton acceptor. Phosphoenolpyruvate is bound by residues Arg347, Arg390, and Lys416.

This sequence belongs to the EPSP synthase family. In terms of assembly, monomer.

It localises to the cytoplasm. The catalysed reaction is 3-phosphoshikimate + phosphoenolpyruvate = 5-O-(1-carboxyvinyl)-3-phosphoshikimate + phosphate. Its pathway is metabolic intermediate biosynthesis; chorismate biosynthesis; chorismate from D-erythrose 4-phosphate and phosphoenolpyruvate: step 6/7. Functionally, catalyzes the transfer of the enolpyruvyl moiety of phosphoenolpyruvate (PEP) to the 5-hydroxyl of shikimate-3-phosphate (S3P) to produce enolpyruvyl shikimate-3-phosphate and inorganic phosphate. This Deinococcus geothermalis (strain DSM 11300 / CIP 105573 / AG-3a) protein is 3-phosphoshikimate 1-carboxyvinyltransferase.